We begin with the raw amino-acid sequence, 354 residues long: Holliday junction branch migration complex subunit RuvB (354 aa).

Residues 1 to 183 (MTGDNLVSAY…FGFVAHLDFY (183 aa)) form a large ATPase domain (RuvB-L) region. ATP-binding positions include arginine 23, glycine 64, lysine 67, threonine 68, serine 69, 130–132 (EDF), arginine 173, tyrosine 183, and arginine 220. Threonine 68 is a binding site for Mg(2+). The small ATPAse domain (RuvB-S) stretch occupies residues 184-254 (SPADLETLLN…TAQAALTVYD (71 aa)). Positions 257–354 (ALGLDRLDRA…DLFSVEPDQP (98 aa)) are head domain (RuvB-H). Arginine 312 and arginine 317 together coordinate DNA.

It belongs to the RuvB family. As to quaternary structure, homohexamer. Forms an RuvA(8)-RuvB(12)-Holliday junction (HJ) complex. HJ DNA is sandwiched between 2 RuvA tetramers; dsDNA enters through RuvA and exits via RuvB. An RuvB hexamer assembles on each DNA strand where it exits the tetramer. Each RuvB hexamer is contacted by two RuvA subunits (via domain III) on 2 adjacent RuvB subunits; this complex drives branch migration. In the full resolvosome a probable DNA-RuvA(4)-RuvB(12)-RuvC(2) complex forms which resolves the HJ.

Its subcellular location is the cytoplasm. It catalyses the reaction ATP + H2O = ADP + phosphate + H(+). Functionally, the RuvA-RuvB-RuvC complex processes Holliday junction (HJ) DNA during genetic recombination and DNA repair, while the RuvA-RuvB complex plays an important role in the rescue of blocked DNA replication forks via replication fork reversal (RFR). RuvA specifically binds to HJ cruciform DNA, conferring on it an open structure. The RuvB hexamer acts as an ATP-dependent pump, pulling dsDNA into and through the RuvAB complex. RuvB forms 2 homohexamers on either side of HJ DNA bound by 1 or 2 RuvA tetramers; 4 subunits per hexamer contact DNA at a time. Coordinated motions by a converter formed by DNA-disengaged RuvB subunits stimulates ATP hydrolysis and nucleotide exchange. Immobilization of the converter enables RuvB to convert the ATP-contained energy into a lever motion, pulling 2 nucleotides of DNA out of the RuvA tetramer per ATP hydrolyzed, thus driving DNA branch migration. The RuvB motors rotate together with the DNA substrate, which together with the progressing nucleotide cycle form the mechanistic basis for DNA recombination by continuous HJ branch migration. Branch migration allows RuvC to scan DNA until it finds its consensus sequence, where it cleaves and resolves cruciform DNA. This is Holliday junction branch migration complex subunit RuvB from Salinispora tropica (strain ATCC BAA-916 / DSM 44818 / JCM 13857 / NBRC 105044 / CNB-440).